A 289-amino-acid chain; its full sequence is 4-hydroxy-3-methylbut-2-enyl diphosphate reductase (289 aa).

Cysteine 12 lines the [4Fe-4S] cluster pocket. Residues histidine 44 and histidine 81 each coordinate (2E)-4-hydroxy-3-methylbut-2-enyl diphosphate. Dimethylallyl diphosphate is bound by residues histidine 44 and histidine 81. Positions 44 and 81 each coordinate isopentenyl diphosphate. [4Fe-4S] cluster is bound at residue cysteine 103. Histidine 130 serves as a coordination point for (2E)-4-hydroxy-3-methylbut-2-enyl diphosphate. Histidine 130 contributes to the dimethylallyl diphosphate binding site. Histidine 130 lines the isopentenyl diphosphate pocket. The Proton donor role is filled by glutamate 132. Residue threonine 174 participates in (2E)-4-hydroxy-3-methylbut-2-enyl diphosphate binding. Cysteine 202 contacts [4Fe-4S] cluster. (2E)-4-hydroxy-3-methylbut-2-enyl diphosphate contacts are provided by serine 230, asparagine 232, and serine 273. The dimethylallyl diphosphate site is built by serine 230, asparagine 232, and serine 273. 3 residues coordinate isopentenyl diphosphate: serine 230, asparagine 232, and serine 273.

This sequence belongs to the IspH family. It depends on [4Fe-4S] cluster as a cofactor.

It catalyses the reaction isopentenyl diphosphate + 2 oxidized [2Fe-2S]-[ferredoxin] + H2O = (2E)-4-hydroxy-3-methylbut-2-enyl diphosphate + 2 reduced [2Fe-2S]-[ferredoxin] + 2 H(+). It carries out the reaction dimethylallyl diphosphate + 2 oxidized [2Fe-2S]-[ferredoxin] + H2O = (2E)-4-hydroxy-3-methylbut-2-enyl diphosphate + 2 reduced [2Fe-2S]-[ferredoxin] + 2 H(+). The protein operates within isoprenoid biosynthesis; dimethylallyl diphosphate biosynthesis; dimethylallyl diphosphate from (2E)-4-hydroxy-3-methylbutenyl diphosphate: step 1/1. It participates in isoprenoid biosynthesis; isopentenyl diphosphate biosynthesis via DXP pathway; isopentenyl diphosphate from 1-deoxy-D-xylulose 5-phosphate: step 6/6. Functionally, catalyzes the conversion of 1-hydroxy-2-methyl-2-(E)-butenyl 4-diphosphate (HMBPP) into a mixture of isopentenyl diphosphate (IPP) and dimethylallyl diphosphate (DMAPP). Acts in the terminal step of the DOXP/MEP pathway for isoprenoid precursor biosynthesis. The sequence is that of 4-hydroxy-3-methylbut-2-enyl diphosphate reductase from Treponema denticola (strain ATCC 35405 / DSM 14222 / CIP 103919 / JCM 8153 / KCTC 15104).